Here is a 244-residue protein sequence, read N- to C-terminus: Tabinhibitin 8 (244 aa).

The first 23 residues, 1-23, serve as a signal peptide directing secretion; that stretch reads MTSILVSRFKISALTLQYATSDS. The SCP domain maps to 67-194; the sequence is YTGGGIIVLR…KTPLFFSSNC (128 aa). The Cell attachment site motif lies at 143–145; that stretch reads RGD.

The protein belongs to the CRISP family. In terms of tissue distribution, expressed in salivary glands.

The protein resides in the secreted. Its function is as follows. Inhibits platelet aggregation induced by all agonists tested (ADP, arachidonic acid, the thromboxane A2 analog U46619, thrombin, and snake venom snaclecs (TMVA that activates platelet through GPIB, and stejnulxin that specifically acts through GPVI (GP6))). May act by competing with fibrinogen for binding to glycoprotein IIb/IIIa (ITGA2B/ITGB3). This Tabanus yao (Horsefly) protein is Tabinhibitin 8.